Here is a 135-residue protein sequence, read N- to C-terminus: uncharacterized protein (135 aa).

A HotDog ACOT-type domain is found at Pro-8–Thr-123.

The protein belongs to the acyl coenzyme A hydrolase family.

This is an uncharacterized protein from Buchnera aphidicola subsp. Schizaphis graminum (strain Sg).